We begin with the raw amino-acid sequence, 118 residues long: Large ribosomal subunit protein uL18 (118 aa).

Residues 1–22 form a disordered region; that stretch reads MISKPDKNKLRQKRHRRVRGKL. Basic residues predominate over residues 10–20; the sequence is LRQKRHRRVRG.

The protein belongs to the universal ribosomal protein uL18 family. As to quaternary structure, part of the 50S ribosomal subunit; part of the 5S rRNA/L5/L18/L25 subcomplex. Contacts the 5S and 23S rRNAs.

Its function is as follows. This is one of the proteins that bind and probably mediate the attachment of the 5S RNA into the large ribosomal subunit, where it forms part of the central protuberance. This Streptococcus thermophilus (strain ATCC BAA-491 / LMD-9) protein is Large ribosomal subunit protein uL18.